We begin with the raw amino-acid sequence, 508 residues long: Probable protein kinase UbiB (508 aa).

Residues D118–L494 enclose the Protein kinase domain. Residues V124–V132 and K151 each bind ATP. Catalysis depends on D286, which acts as the Proton acceptor. Residues Q488–L508 traverse the membrane as a helical segment.

Belongs to the ABC1 family. UbiB subfamily.

The protein localises to the cell inner membrane. The protein operates within cofactor biosynthesis; ubiquinone biosynthesis [regulation]. In terms of biological role, is probably a protein kinase regulator of UbiI activity which is involved in aerobic coenzyme Q (ubiquinone) biosynthesis. The chain is Probable protein kinase UbiB from Chromobacterium violaceum (strain ATCC 12472 / DSM 30191 / JCM 1249 / CCUG 213 / NBRC 12614 / NCIMB 9131 / NCTC 9757 / MK).